Consider the following 687-residue polypeptide: Putative secreted metallopeptidase (687 aa).

The first 22 residues, 1-22 (MLFTSTAVAALSGALLIQPALA), serve as a signal peptide directing secretion. Residues Asn-54, Asn-114, Asn-252, Asn-256, and Asn-379 are each glycosylated (N-linked (GlcNAc...) asparagine).

This sequence belongs to the peptidase M10B family.

Its subcellular location is the secreted. In Arthroderma benhamiae (strain ATCC MYA-4681 / CBS 112371) (Trichophyton mentagrophytes), this protein is Putative secreted metallopeptidase.